The chain runs to 177 residues: Peptide methionine sulfoxide reductase MsrA (177 aa).

C12 is a catalytic residue.

Belongs to the MsrA Met sulfoxide reductase family.

The catalysed reaction is L-methionyl-[protein] + [thioredoxin]-disulfide + H2O = L-methionyl-(S)-S-oxide-[protein] + [thioredoxin]-dithiol. The enzyme catalyses [thioredoxin]-disulfide + L-methionine + H2O = L-methionine (S)-S-oxide + [thioredoxin]-dithiol. Its function is as follows. Has an important function as a repair enzyme for proteins that have been inactivated by oxidation. Catalyzes the reversible oxidation-reduction of methionine sulfoxide in proteins to methionine. The chain is Peptide methionine sulfoxide reductase MsrA from Halobacterium salinarum (strain ATCC 29341 / DSM 671 / R1).